The following is a 655-amino-acid chain: Probable inactive receptor kinase At1g48480 (655 aa).

The signal sequence occupies residues methionine 1 to aspartate 32. LRR repeat units lie at residues serine 71 to asparagine 95, glutamine 98 to serine 120, asparagine 122 to leucine 144, histidine 146 to threonine 169, lysine 170 to leucine 192, and glutamine 194 to serine 215. Residues glutamate 234–lysine 260 are disordered. Residues valine 237 to proline 249 are compositionally biased toward polar residues. A helical transmembrane segment spans residues isoleucine 269–valine 289. Residues arginine 371–serine 646 form the Protein kinase domain. Serine 373 is modified (phosphoserine). Leucine 377–alanine 385 is an ATP binding site. Phosphothreonine is present on threonine 394. ATP is bound at residue lysine 399. Serine 450 is modified (phosphoserine). Threonine 526 is modified (phosphothreonine). Serine 546 carries the post-translational modification Phosphoserine. A Phosphothreonine modification is found at threonine 622.

The protein belongs to the protein kinase superfamily. As to expression, highly expressed in seedlings and leaves. Lower expression in roots, stems, flowers and siliques. Detected in the vascular tissues of roots, in the trichomes of young rosettes leaves and hydathodes, in the floral abscission zones, in filament apex and stomata cells of anthers, in inflorescence stems and in sepals.

The protein resides in the cell membrane. This chain is Probable inactive receptor kinase At1g48480 (RKL1), found in Arabidopsis thaliana (Mouse-ear cress).